We begin with the raw amino-acid sequence, 255 residues long: 4-hydroxy-tetrahydrodipicolinate reductase (255 aa).

NAD(+)-binding positions include 8 to 13, 88 to 90, and 112 to 115; these read GANGRV, GTT, and ATNM. The active-site Proton donor/acceptor is the H144. A (S)-2,3,4,5-tetrahydrodipicolinate-binding site is contributed by H145. K148 functions as the Proton donor in the catalytic mechanism. 154-155 provides a ligand contact to (S)-2,3,4,5-tetrahydrodipicolinate; sequence GT.

It belongs to the DapB family.

It is found in the cytoplasm. It catalyses the reaction (S)-2,3,4,5-tetrahydrodipicolinate + NAD(+) + H2O = (2S,4S)-4-hydroxy-2,3,4,5-tetrahydrodipicolinate + NADH + H(+). The catalysed reaction is (S)-2,3,4,5-tetrahydrodipicolinate + NADP(+) + H2O = (2S,4S)-4-hydroxy-2,3,4,5-tetrahydrodipicolinate + NADPH + H(+). It participates in amino-acid biosynthesis; L-lysine biosynthesis via DAP pathway; (S)-tetrahydrodipicolinate from L-aspartate: step 4/4. Catalyzes the conversion of 4-hydroxy-tetrahydrodipicolinate (HTPA) to tetrahydrodipicolinate. The protein is 4-hydroxy-tetrahydrodipicolinate reductase of Sulfurimonas denitrificans (strain ATCC 33889 / DSM 1251) (Thiomicrospira denitrificans (strain ATCC 33889 / DSM 1251)).